We begin with the raw amino-acid sequence, 445 residues long: Serine/threonine-protein kinase Nek2 (445 aa).

Residues 8–271 (YEVLYTIGTG…VEEILENPLI (264 aa)) enclose the Protein kinase domain. Residues 14–22 (IGTGSYGRC) and K37 contribute to the ATP site. D141 acts as the Proton acceptor in catalysis. T170 is subject to Phosphothreonine; by autocatalysis. At S171 the chain carries Phosphoserine; by autocatalysis. Residues T175 and T179 each carry the phosphothreonine; by autocatalysis modification. Residue S184 is modified to Phosphoserine. The residue at position 241 (S241) is a Phosphoserine; by autocatalysis. Residues 264–445 (EILENPLIAD…LKSRQILGMR (182 aa)) form an interaction with PCNT region. Phosphoserine is present on residues S296 and S300. The interaction with CEP85 stretch occupies residues 301 to 445 (PVLSELKLKE…LKSRQILGMR (145 aa)). Residues 303–362 (LSELKLKEIQLQERERALKAREERLEQKEQELCVRERLAEDKLARAENLLKNYSLLKERK) are a coiled coil. The segment at 306–334 (LKLKEIQLQERERALKAREERLEQKEQEL) is leucine-zipper. The tract at residues 329 to 445 (QKEQELCVRE…LKSRQILGMR (117 aa)) is necessary for interaction with MAD1L1. A required for microtubule binding and for localization to the centrosomes region spans residues 333–370 (ELCVRERLAEDKLARAENLLKNYSLLKERKFLSLASNP). Phosphoserine; by STK3/MST2 occurs at positions 356 and 365. S387, S390, S397, and S402 each carry phosphoserine. The segment at 403–439 (QLTSKSKCKDLKKRLHAAQLRAQALSDIEKNYQLKSR) is interaction with SAV1 and STK3/MST2. Residue S406 is modified to Phosphoserine; by STK3/MST2. A coiled-coil region spans residues 406-430 (SKSKCKDLKKRLHAAQLRAQALSDI). S428 is subject to Phosphoserine. Position 438 is a phosphoserine; by STK3/MST2 (S438).

This sequence belongs to the protein kinase superfamily. NEK Ser/Thr protein kinase family. NIMA subfamily. Isoform 1, isoform 2 and isoform 4 form homo- and heterodimers. Interacts with NECAB3 and HMGA2. Isoform 1 interacts with CDC20, CTNB1, MAD1L1, MAPK, NEK11, NPM1, NDC80, PCNT and SGO1. Isoform 1 interacts with STK3/MST2 (via SARAH domain) and SAV1 (via SARAH domain). Isoform 1 and isoform 2 interact with MAD2L1. Isoform 1 and isoform 4 interact with PPP1CA and PPP1CC. Interacts with CEP68; the interaction leads to phosphorylation of CEP68. Interacts with CNTLN; the interaction leads to phosphorylation of CNTLN. Isoform 1 interacts with CEP85. Interacts with CCDC102B; the interaction leads to phosphorylation of CCDC102B. Mg(2+) serves as cofactor. In terms of processing, activated by autophosphorylation. Protein phosphatase 1 represses autophosphorylation and activation of isoform 1 by dephosphorylation. Phosphorylation by STK3/MST2 is necessary for its localization to the centrosome. Isoform 1 and isoform 2 are expressed in peripheral blood T-cells and a wide variety of transformed cell types. Isoform 1 and isoform 4 are expressed in the testis. Up-regulated in various cancer cell lines, as well as primary breast tumors.

It localises to the nucleus. The protein localises to the nucleolus. It is found in the cytoplasm. The protein resides in the cytoskeleton. Its subcellular location is the microtubule organizing center. It localises to the centrosome. The protein localises to the spindle pole. It is found in the chromosome. The protein resides in the centromere. Its subcellular location is the kinetochore. The enzyme catalyses L-seryl-[protein] + ATP = O-phospho-L-seryl-[protein] + ADP + H(+). It carries out the reaction L-threonyl-[protein] + ATP = O-phospho-L-threonyl-[protein] + ADP + H(+). Isoform 1 is inhibited by ionizing radiation in the presence of PPP1CA. Its catalytic activity is inhibited by the inhibitor CCT241950. In the presence of this inhibitor, displays an autoinhibited conformation: Tyr-70 side chain points into the active site, interacts with the activation loop, and blocks the alphaC helix. Its function is as follows. Protein kinase which is involved in the control of centrosome separation and bipolar spindle formation in mitotic cells and chromatin condensation in meiotic cells. Regulates centrosome separation (essential for the formation of bipolar spindles and high-fidelity chromosome separation) by phosphorylating centrosomal proteins such as CROCC, CEP250 and NINL, resulting in their displacement from the centrosomes. Regulates kinetochore microtubule attachment stability in mitosis via phosphorylation of NDC80. Involved in regulation of mitotic checkpoint protein complex via phosphorylation of CDC20 and MAD2L1. Plays an active role in chromatin condensation during the first meiotic division through phosphorylation of HMGA2. Phosphorylates: PPP1CC; SGO1; NECAB3 and NPM1. Essential for localization of MAD2L1 to kinetochore and MAPK1 and NPM1 to the centrosome. Phosphorylates CEP68 and CNTLN directly or indirectly. NEK2-mediated phosphorylation of CEP68 promotes CEP68 dissociation from the centrosome and its degradation at the onset of mitosis. Involved in the regulation of centrosome disjunction. Phosphorylates CCDC102B either directly or indirectly which causes CCDC102B to dissociate from the centrosome and allows for centrosome separation. In terms of biological role, phosphorylates and activates NEK11 in G1/S-arrested cells. Functionally, not present in the nucleolus and, in contrast to isoform 1, does not phosphorylate and activate NEK11 in G1/S-arrested cells. The protein is Serine/threonine-protein kinase Nek2 (NEK2) of Homo sapiens (Human).